Consider the following 289-residue polypeptide: Polyamine aminopropyltransferase (289 aa).

A PABS domain is found at 5–245; the sequence is PGPIVLVEPL…YAVNYILGSL (241 aa). S-methyl-5'-thioadenosine is bound at residue Gln-36. The spermidine site is built by His-67 and Glu-91. S-methyl-5'-thioadenosine contacts are provided by residues Asp-111 and 143–144; that span reads DG. Asp-164 functions as the Proton acceptor in the catalytic mechanism.

Belongs to the spermidine/spermine synthase family. Homodimer or homotetramer.

The protein resides in the cytoplasm. The catalysed reaction is S-adenosyl 3-(methylsulfanyl)propylamine + putrescine = S-methyl-5'-thioadenosine + spermidine + H(+). Its pathway is amine and polyamine biosynthesis; spermidine biosynthesis; spermidine from putrescine: step 1/1. Functionally, catalyzes the irreversible transfer of a propylamine group from the amino donor S-adenosylmethioninamine (decarboxy-AdoMet) to putrescine (1,4-diaminobutane) to yield spermidine. The protein is Polyamine aminopropyltransferase of Pyrobaculum arsenaticum (strain DSM 13514 / JCM 11321 / PZ6).